Here is a 283-residue protein sequence, read N- to C-terminus: Peroxisomal protein 2 (283 aa).

Residues 281 to 283 carry the Peroxisomal target signal 1 (PTS1) motif; it reads VKL.

The protein belongs to the PXP2 family.

It is found in the peroxisome matrix. The protein localises to the cytoplasm. The protein resides in the cytosol. Its function is as follows. Probably involved in peroxisome formation or maintenance as well as in amino acid metabolism. In Saccharomyces cerevisiae (strain ATCC 204508 / S288c) (Baker's yeast), this protein is Peroxisomal protein 2.